A 155-amino-acid polypeptide reads, in one-letter code: Aspartate carbamoyltransferase regulatory chain (155 aa).

Zn(2+) contacts are provided by Cys112, Cys117, Cys138, and Cys141.

This sequence belongs to the PyrI family. Contains catalytic and regulatory chains. The cofactor is Zn(2+).

Involved in allosteric regulation of aspartate carbamoyltransferase. This chain is Aspartate carbamoyltransferase regulatory chain, found in Methanocorpusculum labreanum (strain ATCC 43576 / DSM 4855 / Z).